The sequence spans 328 residues: Malate dehydrogenase (328 aa).

An NAD(+)-binding site is contributed by 12 to 18; the sequence is GAAGQIG. Arginine 93 and arginine 99 together coordinate substrate. NAD(+) is bound by residues asparagine 106, glutamine 113, and 130–132; that span reads TGN. Residues asparagine 132 and arginine 163 each coordinate substrate. The active-site Proton acceptor is the histidine 188.

Belongs to the LDH/MDH superfamily. MDH type 2 family.

It catalyses the reaction (S)-malate + NAD(+) = oxaloacetate + NADH + H(+). Catalyzes the reversible oxidation of malate to oxaloacetate. This Kocuria rhizophila (strain ATCC 9341 / DSM 348 / NBRC 103217 / DC2201) protein is Malate dehydrogenase.